We begin with the raw amino-acid sequence, 974 residues long: ATP-dependent RNA helicase glh-2 (974 aa).

The tract at residues 212 to 435 (HESGFGGGKS…SGFGGGNDGG (224 aa)) is disordered. Over residues 215-250 (GFGGGKSGGFGGGNSGGSGFGSGGNSNGFGSGGGGQ) the composition is skewed to gly residues. Polar residues predominate over residues 256–267 (NNNCFNCQQPGH). CCHC-type zinc fingers lie at residues 257–274 (NNCFNCQQPGHRSNDCPE) and 282–299 (RVCYNCQQPGHNSRDCPE). Basic and acidic residues-rich tracts occupy residues 268–282 (RSNDCPEPKKEREPR) and 293–307 (NSRDCPEERKPREGR). Over residues 309–364 (GFTGGSSGFGGGNGGGTGFDSGLTNGFGSGNNGESGFGSGGFGGNSNGFGSGGGGQ) the composition is skewed to gly residues. Over residues 370 to 381 (NNNCFNCQQPGH) the composition is skewed to polar residues. CCHC-type zinc fingers lie at residues 371–388 (NNCFNCQQPGHRSNDCPE) and 396–413 (RVCYNCQQPGHNSRDCPE). Composition is skewed to basic and acidic residues over residues 382–396 (RSNDCPEPKKEREPR) and 407–421 (NSRDCPEERKPREGR). Positions 426–435 (SGFGGGNDGG) are enriched in gly residues. 2 consecutive CCHC-type zinc fingers follow at residues 453-470 (MKCFNCKGEGHRSAECPE) and 473-490 (RGCFNCGEQGHRSNECPN). A Q motif motif is present at residues 552 to 580 (KTFSEANLGETMKKNVAHAGYTKTTPIQQ). A Helicase ATP-binding domain is found at 583 to 767 (LPLIHQGHDI…RNHLKEGYIM (185 aa)). Residue 596–603 (AQTGSGKT) participates in ATP binding. The DEAD box motif lies at 710–713 (DEAD). The 148-residue stretch at 803 to 950 (DIDSYTTEKN…LVPEWMQGAS (148 aa)) folds into the Helicase C-terminal domain.

Belongs to the DEAD box helicase family. DDX4/VASA subfamily. Interacts (via C-terminus) with kgb-1.

It carries out the reaction ATP + H2O = ADP + phosphate + H(+). Its function is as follows. Probable ATP-binding RNA helicase. The protein is ATP-dependent RNA helicase glh-2 (glh-2) of Caenorhabditis elegans.